We begin with the raw amino-acid sequence, 199 residues long: NAD(P)H dehydrogenase (quinone) (199 aa).

The Flavodoxin-like domain occupies 4–190 (VLVLYYSSYG…EGARHQGELV (187 aa)). Residues 10–15 (SSYGHI) and 78–80 (TRY) contribute to the FMN site. Y12 serves as a coordination point for NAD(+). W98 is a substrate binding site. FMN-binding positions include 113–119 (STATQHG) and H134.

This sequence belongs to the WrbA family. FMN is required as a cofactor.

It carries out the reaction a quinone + NADH + H(+) = a quinol + NAD(+). It catalyses the reaction a quinone + NADPH + H(+) = a quinol + NADP(+). The protein is NAD(P)H dehydrogenase (quinone) of Paraburkholderia phymatum (strain DSM 17167 / CIP 108236 / LMG 21445 / STM815) (Burkholderia phymatum).